The sequence spans 542 residues: Importin subunit alpha-1 (542 aa).

The interval 1–29 (MSASSRFIPEHRRQNYKGKGTFQADELRR) is disordered. Positions 1–60 (MSASSRFIPEHRRQNYKGKGTFQADELRRRRETQQIEIRKQKREENLNKRRNLVDVQEPA) constitute an IBB domain. ARM repeat units follow at residues 114 to 155 (IQKV…SSNQ), 156 to 197 (THVV…SPMC), 198 to 240 (RDHV…KNPQ), 241 to 282 (PDWN…ANEK), 283 to 324 (IQAI…DDVQ), 325 to 366 (TQVI…NSSQ), 367 to 408 (IQYV…GARR), and 409 to 453 (PDQI…GELD).

It belongs to the importin alpha family. As to quaternary structure, interacts with pap1.

It localises to the nucleus. In terms of biological role, binds specifically and directly to substrates containing either a simple or bipartite NLS motif. Promotes docking of import substrates to the nuclear envelope. Seems to act as a cytosolic receptor for both simple and bipartite NLS motifs. Has an essential role in mitotic chromosome condensation. Involved in nuclear protein import. Required for efficient nuclear import of both an SV40 nuclear localization signal-containing reporter protein and the pap1 component of the stress response MAP kinase pathway. Required for proper mitotic progression. The sequence is that of Importin subunit alpha-1 (cut15) from Schizosaccharomyces pombe (strain 972 / ATCC 24843) (Fission yeast).